We begin with the raw amino-acid sequence, 319 residues long: Acetyl esterase (319 aa).

The Involved in the stabilization of the negatively charged intermediate by the formation of the oxyanion hole motif lies at 91–93 (HGG). Residues Ser-165, Asp-262, and His-292 contribute to the active site.

This sequence belongs to the 'GDXG' lipolytic enzyme family. As to quaternary structure, homodimer. Interacts with MalT and MelA.

The protein resides in the cytoplasm. Functionally, displays esterase activity towards short chain fatty esters (acyl chain length of up to 8 carbons). Able to hydrolyze triacetylglycerol (triacetin) and tributyrylglycerol (tributyrin), but not trioleylglycerol (triolein) or cholesterol oleate. Negatively regulates MalT activity by antagonizing maltotriose binding. Inhibits MelA galactosidase activity. This is Acetyl esterase from Shigella flexneri serotype 5b (strain 8401).